We begin with the raw amino-acid sequence, 484 residues long: uncharacterized protein (484 aa).

Positions 47 to 226 constitute an FAD-binding PCMH-type domain; it reads TLPIPAAVVK…TEVTVKIFKF (180 aa).

It belongs to the FAD-binding oxidoreductase/transferase type 4 family.

This is an uncharacterized protein from Escherichia coli O157:H7.